A 239-amino-acid chain; its full sequence is Sensory rhodopsin-2 (239 aa).

The Extracellular portion of the chain corresponds to 1–3 (MVG). Residues 4 to 25 (LTTLFWLGAIGMLVGTLAFAWA) traverse the membrane as a helical segment. The Cytoplasmic portion of the chain corresponds to 26–33 (GRDAGSGE). Residues 34-55 (RRYYVTLVGISGIAAVAYVVMA) form a helical membrane-spanning segment. Over 56 to 69 (LGVGWVPVAERTVF) the chain is Extracellular. The helical transmembrane segment at 70–91 (APRYIDWILTTPLIVYFLGLLA) threads the bilayer. The Cytoplasmic portion of the chain corresponds to 92-94 (GLD). A helical membrane pass occupies residues 95 to 117 (SREFGIVITLNTVVMLAGFAGAM). Residues 118–121 (VPGI) are Extracellular-facing. A helical membrane pass occupies residues 122–149 (ERYALFGMGAVAFLGLVYYLVGPMTESA). Residues 150-153 (SQRS) lie on the Cytoplasmic side of the membrane. The chain crosses the membrane as a helical span at residues 154–181 (SGIKSLYVRLRNLTVILWAIYPFIWLLG). At 182-189 (PPGVALLT) the chain is on the extracellular side. A helical membrane pass occupies residues 190-222 (PTVDVALIVYLDLVTKVGFGFIALDAAATLRAE). Residue Lys205 is modified to N6-(retinylidene)lysine. Residues 223–239 (HGESLAGVDTDAPAVAD) are Cytoplasmic-facing.

The protein belongs to the archaeal/bacterial/fungal opsin family. As to quaternary structure, homodimer. Interacts with HTR-II.

The protein resides in the cell membrane. Functionally, photophobic photoreceptor responsible for the negative phototaxis. Activates the sensory rhodopsin II transducer (HTR-II) in response to blue light. This is Sensory rhodopsin-2 (sop2) from Natronomonas pharaonis (Natronobacterium pharaonis).